Here is a 283-residue protein sequence, read N- to C-terminus: tRNA pseudouridine synthase B (283 aa).

D38 functions as the Nucleophile in the catalytic mechanism.

It belongs to the pseudouridine synthase TruB family. Type 1 subfamily.

The catalysed reaction is uridine(55) in tRNA = pseudouridine(55) in tRNA. Functionally, responsible for synthesis of pseudouridine from uracil-55 in the psi GC loop of transfer RNAs. This is tRNA pseudouridine synthase B from Aster yellows witches'-broom phytoplasma (strain AYWB).